Reading from the N-terminus, the 428-residue chain is Dihydroorotase (428 aa).

Residues histidine 59 and histidine 61 each coordinate Zn(2+). Substrate-binding positions include histidine 61 to arginine 63 and asparagine 93. Residues aspartate 151, histidine 178, and histidine 231 each coordinate Zn(2+). Asparagine 277 contributes to the substrate binding site. Aspartate 304 serves as a coordination point for Zn(2+). Aspartate 304 is a catalytic residue. Residues histidine 308 and phenylalanine 322–glycine 323 each bind substrate.

Belongs to the metallo-dependent hydrolases superfamily. DHOase family. Class I DHOase subfamily. It depends on Zn(2+) as a cofactor.

The catalysed reaction is (S)-dihydroorotate + H2O = N-carbamoyl-L-aspartate + H(+). The protein operates within pyrimidine metabolism; UMP biosynthesis via de novo pathway; (S)-dihydroorotate from bicarbonate: step 3/3. Functionally, catalyzes the reversible cyclization of carbamoyl aspartate to dihydroorotate. This is Dihydroorotase from Bacillus cereus (strain B4264).